We begin with the raw amino-acid sequence, 341 residues long: Phosphate acyltransferase (341 aa).

It belongs to the PlsX family. In terms of assembly, homodimer. Probably interacts with PlsY.

The protein localises to the cytoplasm. It catalyses the reaction a fatty acyl-[ACP] + phosphate = an acyl phosphate + holo-[ACP]. Its pathway is lipid metabolism; phospholipid metabolism. In terms of biological role, catalyzes the reversible formation of acyl-phosphate (acyl-PO(4)) from acyl-[acyl-carrier-protein] (acyl-ACP). This enzyme utilizes acyl-ACP as fatty acyl donor, but not acyl-CoA. This is Phosphate acyltransferase from Vibrio campbellii (strain ATCC BAA-1116).